Here is a 211-residue protein sequence, read N- to C-terminus: Urease accessory protein UreF (211 aa).

The protein belongs to the UreF family. In terms of assembly, ureD, UreF and UreG form a complex that acts as a GTP-hydrolysis-dependent molecular chaperone, activating the urease apoprotein by helping to assemble the nickel containing metallocenter of UreC. The UreE protein probably delivers the nickel.

The protein resides in the cytoplasm. Functionally, required for maturation of urease via the functional incorporation of the urease nickel metallocenter. This is Urease accessory protein UreF from Mycobacterium sp. (strain JLS).